The primary structure comprises 697 residues: Choline transporter-like protein 2 (697 aa).

The Cytoplasmic portion of the chain corresponds to 1–30; the sequence is MDMEEKPKYGEPRKFDPSFKGPIQNRGCTD. A helical membrane pass occupies residues 31–51; the sequence is IVCCIIFIIAILGYLAVGILA. The Extracellular portion of the chain corresponds to 52–226; sequence WTHGDPRKVI…KIFEDYTKSW (175 aa). N-linked (GlcNAc...) asparagine glycans are attached at residues Asn113 and Asn204. Residues 227-247 traverse the membrane as a helical segment; it reads YWILICLLIAVVLSLIFIVLL. Residues 248–249 lie on the Cytoplasmic side of the membrane; the sequence is RF. The chain crosses the membrane as a helical span at residues 250 to 270; it reads LAGVMVWVMILMVVAVIAYGI. At 271–309 the chain is on the extracellular side; it reads AHCSIKYVSLKDTPGSNITLQQLGFQPDFAVYLHIRQTW. Asn287 carries an N-linked (GlcNAc...) asparagine glycan. Residues 310 to 330 form a helical membrane-spanning segment; it reads LAFIIILAILELIIILLLIFL. Residues 331–353 lie on the Cytoplasmic side of the membrane; sequence RNRIRVAVELMKEASRAIGYVMS. A helical membrane pass occupies residues 354-374; that stretch reads SLVFPIFTFFLLAIVIAFWGV. The Extracellular portion of the chain corresponds to 375–435; that stretch reads NAVFLSTSSE…YGGETPYHKY (61 aa). N-linked (GlcNAc...) asparagine glycans are attached at residues Asn391 and Asn406. Residues 436-456 traverse the membrane as a helical segment; the sequence is LILLQFYNVFLFFWCANFVTA. The Cytoplasmic portion of the chain corresponds to 457 to 498; the sequence is LGQMTLAGAFASYYWAFDKSKDMPAFPLCASLGRSLRYHTGS. The helical transmembrane segment at 499 to 519 threads the bilayer; it reads LAFGSLLLAIVQVIRVLLEYI. Residues 520 to 593 are Extracellular-facing; the sequence is DHKLKGAENK…RVVVLDKVTD (74 aa). A helical membrane pass occupies residues 594 to 614; sequence FILFLGKLLIVGLVGIFAFFF. Topologically, residues 615 to 632 are cytoplasmic; that stretch reads FSGQTDAFKGTAPSLHYY. Residues 633-653 traverse the membrane as a helical segment; it reads WVPILTVLVCSYLIAHGFFSV. Over 654 to 697 the chain is Extracellular; the sequence is YAMCVDTLFLCFLEDLERNDGSAERPYLMSENLLNVLKKKNQAN.

The protein belongs to the CTL (choline transporter-like) family.

Its subcellular location is the cell membrane. It localises to the mitochondrion outer membrane. The catalysed reaction is choline(out) + n H(+)(in) = choline(in) + n H(+)(out). It carries out the reaction ethanolamine(out) + n H(+)(in) = ethanolamine(in) + n H(+)(out). Its function is as follows. Choline/H+ antiporter, mainly in mitochodria. Also acts as a low-affinity ethanolamine/H+ antiporter, regulating the supply of extracellular ethanolamine (Etn) for the CDP-Etn pathway, redistribute intracellular Etn and balance the CDP-Cho and CDP-Etn arms of the Kennedy pathway. The sequence is that of Choline transporter-like protein 2 (slc44a2) from Danio rerio (Zebrafish).